The chain runs to 332 residues: Lipoyl synthase (332 aa).

7 residues coordinate [4Fe-4S] cluster: Cys-74, Cys-79, Cys-85, Cys-100, Cys-104, Cys-107, and Ser-314. One can recognise a Radical SAM core domain in the interval Cys-85–Thr-303.

It belongs to the radical SAM superfamily. Lipoyl synthase family. The cofactor is [4Fe-4S] cluster.

The protein resides in the cytoplasm. The catalysed reaction is [[Fe-S] cluster scaffold protein carrying a second [4Fe-4S](2+) cluster] + N(6)-octanoyl-L-lysyl-[protein] + 2 oxidized [2Fe-2S]-[ferredoxin] + 2 S-adenosyl-L-methionine + 4 H(+) = [[Fe-S] cluster scaffold protein] + N(6)-[(R)-dihydrolipoyl]-L-lysyl-[protein] + 4 Fe(3+) + 2 hydrogen sulfide + 2 5'-deoxyadenosine + 2 L-methionine + 2 reduced [2Fe-2S]-[ferredoxin]. Its pathway is protein modification; protein lipoylation via endogenous pathway; protein N(6)-(lipoyl)lysine from octanoyl-[acyl-carrier-protein]: step 2/2. Functionally, catalyzes the radical-mediated insertion of two sulfur atoms into the C-6 and C-8 positions of the octanoyl moiety bound to the lipoyl domains of lipoate-dependent enzymes, thereby converting the octanoylated domains into lipoylated derivatives. The chain is Lipoyl synthase from Paracidovorax citrulli (strain AAC00-1) (Acidovorax citrulli).